We begin with the raw amino-acid sequence, 256 residues long: MAHRPPSPALASVLLALLLSGAARAAEIVGGHEAQPHSRPYMASLQMRGNPGSHFCGGTLIHPSFVLTAAHCLRDIPQRLVNVVLGAHNVRTQEPTQQHFSVAQVFLNNYDAENKLNDVLLIQLSSPANLSASVATVQLPQQDQPVPHGTQCLAMGWGRVGAHDPPAQVLQELNVTVVTFFCRPHNICTFVPRRKAGICFGDSGGPLICDGIIQGIDSFVIWGCATRLFPDFFTRVALYVDWIRSTLRRVEAKGRP.

A signal peptide spans 1–25; it reads MAHRPPSPALASVLLALLLSGAARA. The propeptide occupies 26–27; the sequence is AE. In terms of domain architecture, Peptidase S1 spans 28–248; that stretch reads IVGGHEAQPH…YVDWIRSTLR (221 aa). An intrachain disulfide couples cysteine 56 to cysteine 72. Residues histidine 71 and aspartate 118 each act as charge relay system in the active site. N-linked (GlcNAc...) asparagine glycans are attached at residues asparagine 129 and asparagine 174. Disulfide bonds link cysteine 152–cysteine 209, cysteine 182–cysteine 188, and cysteine 199–cysteine 224. Catalysis depends on serine 203, which acts as the Charge relay system. The propeptide occupies 249-256; that stretch reads RVEAKGRP.

It belongs to the peptidase S1 family. Elastase subfamily. In terms of assembly, may form dimers. Interacts with CD177; the interaction tethers PRTN3 to the cell surface; the interaction is direct. Interacts with SERPINB1. Interacts with ADGRG3. Expressed in polymorphonuclear leukocytes (at protein level). Expressed in neutrophils (at protein level). Expressed in differentiating neutrophils.

Its subcellular location is the cytoplasmic granule. The protein localises to the secreted. It localises to the cell membrane. The protein resides in the membrane raft. The catalysed reaction is Hydrolysis of proteins, including elastin, by preferential cleavage: -Ala-|-Xaa- &gt; -Val-|-Xaa-.. Inhibited by phenylmethanesulfonyl fluoride (PMSF) and diisopropyl fluorophosphate (DFP). Functionally, serine protease that degrades elastin, fibronectin, laminin, vitronectin, and collagen types I, III, and IV (in vitro). By cleaving and activating receptor F2RL1/PAR-2, enhances endothelial cell barrier function and thus vascular integrity during neutrophil transendothelial migration. Plays a role in neutrophil transendothelial migration, probably when associated with CD177. Triggers inflammatory processes in neutrophils by interacting with ADGRG3 upstream of F2RL1/PAR2 activation. This is Myeloblastin (PRTN3) from Homo sapiens (Human).